The following is a 515-amino-acid chain: 4-hydroxybenzoate brominase (decarboxylating) (515 aa).

Residues Ser-13, Glu-32, Val-40, Phe-41, His-51, Val-102, and Gln-364 each coordinate FAD.

It belongs to the FMO family. Requires FAD as cofactor.

It catalyses the reaction 2 bromide + 4-hydroxybenzoate + 2 NADPH + 2 O2 + 5 H(+) = 2,4-dibromophenol + CO2 + 2 NADP(+) + 4 H2O. It carries out the reaction bromide + 4-hydroxybenzoate + NADPH + O2 + 2 H(+) = 3-bromo-4-hydroxybenzoate + NADP(+) + 2 H2O. The enzyme catalyses 3-bromo-4-hydroxybenzoate + bromide + NADPH + O2 + 3 H(+) = 2,4-dibromophenol + CO2 + NADP(+) + 2 H2O. The catalysed reaction is 3,4-dihydroxybenzoate + 2 bromide + 2 NADPH + 2 O2 + 5 H(+) = 3,5-dibromobenzene-1,2-diol + CO2 + 2 NADP(+) + 4 H2O. It catalyses the reaction 3,4-dihydroxybenzoate + bromide + NADPH + O2 + 2 H(+) = 3-bromo-4,5-dihydroxybenzoate + NADP(+) + 2 H2O. It carries out the reaction 3-bromo-4,5-dihydroxybenzoate + bromide + NADPH + O2 + 3 H(+) = 3,5-dibromobenzene-1,2-diol + CO2 + NADP(+) + 2 H2O. Activity is abolished in the absence of either bromide or NADPH, while a partial reduction in activity is observed upon omission of FAD. Activity does not require the addition of a flavin reductase to regenerate FADH(2) in situ. Brominase involved in the biosynthesis of polybrominated aromatic organic compounds. Catalyzes the bromination of 4-hydroxybenzoate (4-HBA) to 3-bromo-4-hydroxybenzoate, followed by bromination and decarboxylation of 3-bromo-4-hydroxybenzoate to 2,4-dibromophenol. Can also use 3,4-dihydroxybenzoate, with lower efficiency, forming 3-bromo-4,5-dihydroxybenzoate and 3,5-dibromobenzene-1,2-diol. Can utilize iodide in vivo leading to the formation of iodophenols, but cannot use chloride. The protein is 4-hydroxybenzoate brominase (decarboxylating) of Pseudoalteromonas luteoviolacea (strain 2ta16).